A 79-amino-acid chain; its full sequence is Sperm-specific basic nuclear protein SP4 (79 aa).

Residues 1-79 are disordered; sequence MSKVSGGSRR…ARDYGSDYRS (79 aa). Residues 9–60 are compositionally biased toward basic residues; it reads RRTRARRPMSNRRGRRSQSAAHRSRAQRRRRRTGTTRRARTSTARRARTRTA. 2 repeats span residues 45-52 and 53-60; these read RRARTSTA and RRARTRTA. The span at 61 to 79 shows a compositional bias: basic and acidic residues; that stretch reads RRSDLTRMMARDYGSDYRS.

The protein localises to the nucleus. The polypeptide is Sperm-specific basic nuclear protein SP4 (sp4-a) (Xenopus laevis (African clawed frog)).